Here is an 855-residue protein sequence, read N- to C-terminus: Leucine--tRNA ligase (855 aa).

Positions 45–55 (PYPSGRLHMGH) match the 'HIGH' region motif. A 'KMSKS' region motif is present at residues 619-623 (KMSKS). Residue K622 participates in ATP binding.

The protein belongs to the class-I aminoacyl-tRNA synthetase family.

It is found in the cytoplasm. The enzyme catalyses tRNA(Leu) + L-leucine + ATP = L-leucyl-tRNA(Leu) + AMP + diphosphate. The polypeptide is Leucine--tRNA ligase (Hyphomonas neptunium (strain ATCC 15444)).